Consider the following 104-residue polypeptide: L-rhamnose mutarotase (104 aa).

Position 18 (Tyr-18) interacts with substrate. His-22 acts as the Proton donor in catalysis. Substrate-binding positions include Tyr-41 and 76–77 (WW).

This sequence belongs to the rhamnose mutarotase family. Homodimer.

The protein resides in the cytoplasm. It catalyses the reaction alpha-L-rhamnose = beta-L-rhamnose. It participates in carbohydrate metabolism; L-rhamnose metabolism. In terms of biological role, L-rhamnose mutarotase involved in ulvan degradation. Ulvan is the main polysaccharide component of the Ulvales (green seaweed) cell wall. It is composed of disaccharide building blocks comprising 3-sulfated rhamnose (Rha3S) linked to D-glucuronic acid (GlcA), L-iduronic acid (IduA), or D-xylose (Xyl). L-rhamnose mutarotase catalyzes the anomeric conversion of alpha- to beta-L-rhamnose. This Formosa agariphila (strain DSM 15362 / KCTC 12365 / LMG 23005 / KMM 3901 / M-2Alg 35-1) protein is L-rhamnose mutarotase (rhaM).